The following is a 92-amino-acid chain: Signal recognition particle 19 kDa protein (92 aa).

It belongs to the SRP19 family. Part of the signal recognition particle protein translocation system, which is composed of SRP and FtsY. Archaeal SRP consists of a 7S RNA molecule of 300 nucleotides and two protein subunits: SRP54 and SRP19.

It is found in the cytoplasm. Involved in targeting and insertion of nascent membrane proteins into the cytoplasmic membrane. Binds directly to 7S RNA and mediates binding of the 54 kDa subunit of the SRP. This chain is Signal recognition particle 19 kDa protein, found in Halorubrum lacusprofundi (strain ATCC 49239 / DSM 5036 / JCM 8891 / ACAM 34).